A 243-amino-acid chain; its full sequence is MLWMVWVFLLKPVIVFSIAYILFRLAGKKAVSQMNNFDLLLTFAIGTIISEPILTSKLPMSIYYAGAFLVLYLIMSKLSLSNKWRWLLVVSPTVLIRNGDIDERGLRKERLTVNELLGKLREKGYADPADIDLAIIEETGEVSVIPKEEARAVQVRDLNMEAERNFIPIPLILDGEILDHNLKYLQKNRSWLFEKLEEKGYSPKLLSSIILGTMNARGDISLDLNTANEPQHDPYLYKPGNNN.

The next 3 membrane-spanning stretches (helical) occupy residues 3–23, 34–54, and 58–78; these read WMVW…YILF, MNNF…EPIL, and LPMS…MSKL.

Belongs to the UPF0702 family.

It is found in the cell membrane. The chain is UPF0702 transmembrane protein YkjA (ykjA) from Bacillus subtilis (strain 168).